The following is a 219-amino-acid chain: Protein-methionine-sulfoxide reductase heme-binding subunit MsrQ (219 aa).

5 consecutive transmembrane segments (helical) span residues 17 to 37, 88 to 108, 121 to 141, 153 to 173, and 184 to 204; these read AKPL…YAAW, LFAY…DMGF, PFIL…ATSF, WQLL…HFFW, and VFVY…NHWA.

The protein belongs to the MsrQ family. In terms of assembly, heterodimer of a catalytic subunit (MsrP) and a heme-binding subunit (MsrQ). Requires FMN as cofactor. Heme b serves as cofactor.

The protein localises to the cell inner membrane. In terms of biological role, part of the MsrPQ system that repairs oxidized periplasmic proteins containing methionine sulfoxide residues (Met-O), using respiratory chain electrons. Thus protects these proteins from oxidative-stress damage caused by reactive species of oxygen and chlorine generated by the host defense mechanisms. MsrPQ is essential for the maintenance of envelope integrity under bleach stress, rescuing a wide series of structurally unrelated periplasmic proteins from methionine oxidation. MsrQ provides electrons for reduction to the reductase catalytic subunit MsrP, using the quinone pool of the respiratory chain. The sequence is that of Protein-methionine-sulfoxide reductase heme-binding subunit MsrQ from Polaromonas naphthalenivorans (strain CJ2).